A 205-amino-acid chain; its full sequence is GTP cyclohydrolase-2 (205 aa).

Residue 49-53 (RIHSE) coordinates GTP. Positions 54, 65, and 67 each coordinate Zn(2+). Residues Gln-70, 92–94 (EGR), and Thr-114 contribute to the GTP site. The Proton acceptor role is filled by Asp-126. Arg-128 serves as the catalytic Nucleophile. Positions 149 and 154 each coordinate GTP.

It belongs to the GTP cyclohydrolase II family. Requires Zn(2+) as cofactor.

It carries out the reaction GTP + 4 H2O = 2,5-diamino-6-hydroxy-4-(5-phosphoribosylamino)-pyrimidine + formate + 2 phosphate + 3 H(+). Its pathway is cofactor biosynthesis; riboflavin biosynthesis; 5-amino-6-(D-ribitylamino)uracil from GTP: step 1/4. In terms of biological role, catalyzes the conversion of GTP to 2,5-diamino-6-ribosylamino-4(3H)-pyrimidinone 5'-phosphate (DARP), formate and pyrophosphate. In Shewanella loihica (strain ATCC BAA-1088 / PV-4), this protein is GTP cyclohydrolase-2.